The sequence spans 201 residues: 3-isopropylmalate dehydratase small subunit (201 aa).

The protein belongs to the LeuD family. LeuD type 1 subfamily. In terms of assembly, heterodimer of LeuC and LeuD.

It carries out the reaction (2R,3S)-3-isopropylmalate = (2S)-2-isopropylmalate. Its pathway is amino-acid biosynthesis; L-leucine biosynthesis; L-leucine from 3-methyl-2-oxobutanoate: step 2/4. Its function is as follows. Catalyzes the isomerization between 2-isopropylmalate and 3-isopropylmalate, via the formation of 2-isopropylmaleate. This Dinoroseobacter shibae (strain DSM 16493 / NCIMB 14021 / DFL 12) protein is 3-isopropylmalate dehydratase small subunit.